Consider the following 248-residue polypeptide: MTSHPRDTPQFYLTAPSPCPYLPGQEERKVFTHLVGRRARDLNEILTQGGFRRSQTIAYRPACETCRACVSVRVVVEDFAITGSQRRILQRNAGLIGTPEPNRPASEQYALFRRYLDARHGDGGMVDMTVLDYAMMIEDSHVDTHLVVYRERGPDSAIHGRGVGAPVAVCLTDVLADGLSMVYSFYDPEAASRSLGTYMILDHIQRARALGLPYLYLGYWVDGSRKMDYKAKFKPQERLMPQGWVRVE.

Belongs to the R-transferase family. Bpt subfamily.

It is found in the cytoplasm. It catalyses the reaction N-terminal L-glutamyl-[protein] + L-leucyl-tRNA(Leu) = N-terminal L-leucyl-L-glutamyl-[protein] + tRNA(Leu) + H(+). The enzyme catalyses N-terminal L-aspartyl-[protein] + L-leucyl-tRNA(Leu) = N-terminal L-leucyl-L-aspartyl-[protein] + tRNA(Leu) + H(+). In terms of biological role, functions in the N-end rule pathway of protein degradation where it conjugates Leu from its aminoacyl-tRNA to the N-termini of proteins containing an N-terminal aspartate or glutamate. This Methylorubrum populi (strain ATCC BAA-705 / NCIMB 13946 / BJ001) (Methylobacterium populi) protein is Aspartate/glutamate leucyltransferase.